The chain runs to 181 residues: Adenine phosphoribosyltransferase (181 aa).

Belongs to the purine/pyrimidine phosphoribosyltransferase family. Homodimer.

The protein localises to the cytoplasm. It carries out the reaction AMP + diphosphate = 5-phospho-alpha-D-ribose 1-diphosphate + adenine. Its pathway is purine metabolism; AMP biosynthesis via salvage pathway; AMP from adenine: step 1/1. Its function is as follows. Catalyzes a salvage reaction resulting in the formation of AMP, that is energically less costly than de novo synthesis. This is Adenine phosphoribosyltransferase from Colwellia psychrerythraea (strain 34H / ATCC BAA-681) (Vibrio psychroerythus).